The sequence spans 142 residues: UPF0102 protein Bcep18194_A3391 (142 aa).

Positions 1–27 are disordered; the sequence is MCHAAPARPGDGRGLPRAGDNFSGAAR.

It belongs to the UPF0102 family.

In Burkholderia lata (strain ATCC 17760 / DSM 23089 / LMG 22485 / NCIMB 9086 / R18194 / 383), this protein is UPF0102 protein Bcep18194_A3391.